We begin with the raw amino-acid sequence, 1165 residues long: MMFDTLGKRCCPWRLKPSALLFLFVLCVTCVPLSVCGCGSCRLVLSNPSGTFTSPCYPNDYPNTQSCSWTLRAPAGYIIQITFNDFDIEEAPNCIYDSLSLDNGESQTKFCGATAKGLSFNSSVNEMHVSFSSDFSIQKKGFNASYIRVAVSLRNQKVILPQTLDAYQVSVAKSISIPELKAFTLCFEASKVGNEGGDWTAFSYSDESLTQLLSLEKASNGYFLSISGSRCLLNNALPVKDKEDIFTENLEQLCLVWNNSWGSIGINFKKNYETVPCDSTISAVVPGDGTLLLGSDRDEVASLRGSIYNFRLWNFTMDLKALSNLSCSVSGNVIDWHNDFWSISTQALKAEGNLSCGSYLIQLPAAELTNCSELGTLCQDGIMYRISVVIHNDFNHPEVKVQTKVAEWLNSTFQNWNYTVYVVNISFHQKVGEDRMKVKRDIMDDDKRLVLWALLVYNATNNVSLNEEKIKQKLMTNNASLEDGLRLCEVDVNQLGMCSALEDPDGFSWPATLPSVYKQPCPNKPGFFMTRACLSNGTSTFWGPVDTSNCSRQSNEVANEILNQTGDGQNLTSANINSIVEKVKRIVNKEENIDITLGSTLMNIFSNILSSSDSDLLESSTEALKTIDELAFKIDLNSTPHVNIETQNLALGVSSLIPGTNAPSNFSIGLPSNNESYFQMDFGNGQTDPLASVILPPNLLENLSPEDSVLVRRAQFTFFNKTGLFQDVGSQRKVLVSYVMACSIGNITIQNLKDPVQIKIKHTRTQEVHHPICAFWDMNKNKSFGGWNTSGCVAHSDLDAGETICLCSHFTHFGVLMDLPRSASQIDGRNTKVLTFITYIGCGISAIFSAATLLTYVAFEKLRRDYPSKILMNLSSALLFLNLIFLLDGWVTSFGVAGLCTAVAALLHFFLLATFTWMGLEAIHMYIALVKVFNTYIHRYILKFCIIGWGLPALVVSIILVSRRQNEVYGKESYGKDQDDEFCWIQDPVVFYVSCAGYFGVMFFLNVAMFIVVMVQICGRNGKRSNRTLREEVLRNLRSVVSLTFLLGMTWGFAFFAWGPLNIPFMYLFSIFNSLQGLFIFIFHCAMKENVQKQWRRHLCCGRFRLADNSDWSKTATNIIKKSSDNLGKSLSSSSIGSNSTYLTSKSKSSSTTYFKRNSHSDNFS.

Positions M1–C30 are cleaved as a signal peptide. Over V31 to K832 the chain is Extracellular. Residues C41 and C67 are joined by a disulfide bond. In terms of domain architecture, CUB spans C41–V149. Ca(2+) contacts are provided by E89 and D97. Cysteines 94 and 111 form a disulfide. N121 carries N-linked (GlcNAc...) asparagine glycosylation. Ca(2+) is bound by residues D134, S136, and I137. N143 carries an N-linked (GlcNAc...) asparagine glycan. The region spanning R154–C356 is the Pentraxin (PTX) domain. 2 cysteine pairs are disulfide-bonded: C186–C254 and C231–C277. 11 N-linked (GlcNAc...) asparagine glycosylation sites follow: N258, N314, N324, N353, N370, N410, N417, N424, N458, N462, and N478. The mediates interaction with laminin-2 stretch occupies residues D446–C807. 2 disulfide bridges follow: C498–C533 and C521–C550. N536, N549, N563, N570, N665, N674, N720, N746, N781, and N788 each carry an N-linked (GlcNAc...) asparagine glycan. One can recognise a GAIN-B domain in the interval P640–A823. Intrachain disulfides connect C773-C805 and C792-C807. The interval C773 to A823 is GPS. The segment at H812–P820 is stachel. Residues V833 to L853 form a helical membrane-spanning segment. At L854 to N873 the chain is on the cytoplasmic side. Residues L874–F894 form a helical membrane-spanning segment. Residues G895–L899 are Extracellular-facing. Residues C900–L920 form a helical membrane-spanning segment. Over E921–Y940 the chain is Cytoplasmic. A helical membrane pass occupies residues I941–V961. Residues S962–S994 are Extracellular-facing. The chain crosses the membrane as a helical span at residues C995 to V1015. The Cytoplasmic portion of the chain corresponds to Q1016 to S1039. Residues V1040–P1060 traverse the membrane as a helical segment. Topologically, residues L1061 to N1062 are extracellular. The chain crosses the membrane as a helical span at residues I1063–F1083. N1073 serves as a coordination point for 17alpha-hydroxyprogesterone. Topologically, residues H1084–S1165 are cytoplasmic. Over residues N1126–Y1154 the composition is skewed to low complexity. A disordered region spans residues N1126 to S1165. S1135 and S1138 each carry phosphoserine.

It belongs to the G-protein coupled receptor 2 family. Adhesion G-protein coupled receptor (ADGR) subfamily. Heterodimer of 2 chains generated by proteolytic processing; the large extracellular N-terminal fragment and the membrane-bound C-terminal fragment predominantly remain associated and non-covalently linked. Interacts with Laminin-2; this interaction stabilizes the receptor in an inactive state. Laminin-2 polymerization could facilitate ADGRG6-NTF removal, thereby exposing the tethered agonist to drive myelination. Interacts with PRNP. Interacts with ITGB1. Interacts with LRP1. In terms of processing, proteolytically cleaved into 2 conserved sites: one in the GPS region of the GAIN-B domain (S1 site) and the other in the middle of the extracellular domain (S2 site). The proteolytic cleavage at S1 site generates an extracellular subunit and a seven-transmembrane subunit. Furin is involved in the cleavage of the S2 site generating a soluble fragment. Processing at the GPS region occurred independent of and probably prior to the cleavage at the S2 site. Proteolytic cleavage is required for activation of the receptor. In terms of tissue distribution, expressed at high levels in the heart, somite and otic vesicle during embryogenesis and in adult lung.

The protein localises to the cell membrane. With respect to regulation, forms a heterodimer of 2 chains generated by proteolytic processing that remain associated through non-covalent interactions mediated by the GAIN-B domain. In the inactivated receptor, the Stachel sequence (also named stalk) is embedded in the GAIN-B domain, where it adopts a beta-strand conformation. On activation, the Stachel moves into the 7 transmembrane region and adopts a twisted hook-shaped configuration that forms contacts within the receptor, leading to coupling of a G-alpha protein, which activates signaling. The cleaved GAIN-B and N-terminal domains can then dissociate from the rest of the receptor. Its function is as follows. Adhesion G-protein coupled receptor (aGPCR) for steroid hormones, such as progesterone and 17alpha-hydroxyprogesterone (17OHP). Involved in many biological processes, such as myelination, sprouting angiogenesis, placenta, ear and cartilage development. Ligand binding causes a conformation change that triggers signaling via guanine nucleotide-binding proteins (G proteins) and modulates the activity of downstream effectors, such as adenylate cyclase. ADGRG6 is coupled to G(i) G alpha proteins and mediates inhibition of adenylate cyclase. Also able to couple to G(q) G proteins. Involved in myelination of the peripheral nervous system: required for differentiation of promyelinating Schwann cells and for normal myelination of axons. Also acts as a regulator of body length and bone mass. Acts as a regulator of blood-brain barrier formation in the central nervous system vie its association with LRP1 and ITGB1. The polypeptide is Adhesion G-protein coupled receptor G6 (Mus musculus (Mouse)).